We begin with the raw amino-acid sequence, 285 residues long: Undecaprenyl-diphosphatase (285 aa).

Helical transmembrane passes span 3–23, 41–61, 87–107, 109–129, 197–217, 226–246, and 260–280; these read ILLL…EFLP, GEIV…AVIW, LLIA…LIKE, LFHP…ILWV, TEFS…YSLI, GDLP…LVCI, and VFAW…WGGW.

This sequence belongs to the UppP family.

It localises to the cell inner membrane. It carries out the reaction di-trans,octa-cis-undecaprenyl diphosphate + H2O = di-trans,octa-cis-undecaprenyl phosphate + phosphate + H(+). In terms of biological role, catalyzes the dephosphorylation of undecaprenyl diphosphate (UPP). Confers resistance to bacitracin. In Methylibium petroleiphilum (strain ATCC BAA-1232 / LMG 22953 / PM1), this protein is Undecaprenyl-diphosphatase.